The following is a 191-amino-acid chain: HTH-type transcriptional regulator YjdC (191 aa).

Positions 1–60 (MQREDVLGEALKLLELQGIANTTLEMVAERVDYPLDELRRFWPDKEAILYDALRYLSQQI) constitute an HTH tetR-type domain.

The polypeptide is HTH-type transcriptional regulator YjdC (yjdC) (Escherichia coli (strain K12)).